We begin with the raw amino-acid sequence, 75 residues long: UPF0352 protein ESA_01049 (75 aa).

It belongs to the UPF0352 family.

This Cronobacter sakazakii (strain ATCC BAA-894) (Enterobacter sakazakii) protein is UPF0352 protein ESA_01049.